The sequence spans 653 residues: Poly [ADP-ribose] polymerase 2 (653 aa).

Residues 2-36 enclose the SAP 1 domain; the sequence is SARLRVADVRAELQRRGLDVSGTKPALVRRLDAAI. Residues 64–84 are disordered; it reads NCGNNKRKRSGDGGEEGNGDT. Positions 69 to 72 match the Nuclear localization signal motif; sequence KRKR. The SAP 2 domain maps to 91–125; sequence LEGMSYRELQGLAKARGVAANGGKKDVIQRLLSAT. Residues 179-276 enclose the WGR domain; the sequence is NYHVLQVGDE…KNFKCYAKKY (98 aa). One can recognise a PARP alpha-helical domain in the interval 301-419; the sequence is ETKLETRIAQ…EIEIATKLLE (119 aa). The PARP catalytic domain occupies 427-653; sequence DPLYARYKQL…LHVNFNFKRR (227 aa).

Belongs to the ARTD/PARP family.

Its subcellular location is the nucleus. The enzyme catalyses NAD(+) + (ADP-D-ribosyl)n-acceptor = nicotinamide + (ADP-D-ribosyl)n+1-acceptor + H(+).. The catalysed reaction is L-aspartyl-[protein] + NAD(+) = 4-O-(ADP-D-ribosyl)-L-aspartyl-[protein] + nicotinamide. It carries out the reaction L-glutamyl-[protein] + NAD(+) = 5-O-(ADP-D-ribosyl)-L-glutamyl-[protein] + nicotinamide. In terms of biological role, involved in the base excision repair (BER) pathway, by catalyzing the poly(ADP-ribosyl)ation of a limited number of acceptor proteins involved in chromatin architecture and in DNA metabolism. This modification follows DNA damages and appears as an obligatory step in a detection/signaling pathway leading to the reparation of DNA strand breaks. This Zea mays (Maize) protein is Poly [ADP-ribose] polymerase 2 (PARP2).